We begin with the raw amino-acid sequence, 636 residues long: Autophagy-related protein 20 (636 aa).

Disordered regions lie at residues Met1–Glu68 and Asn84–Lys163. Over residues Asn10–Leu23 the composition is skewed to polar residues. A compositionally biased stretch (basic and acidic residues) spans Lys27–Ser49. The span at Asn50–Asp64 shows a compositional bias: polar residues. The segment covering Asn122–Ser133 has biased composition (basic residues). The region spanning Glu160–Trp305 is the PX domain. Residues Arg196, Ser198, Lys222, and Arg271 each contribute to the a 1,2-diacyl-sn-glycero-3-phospho-(1D-myo-inositol-3-phosphate) site.

It belongs to the sorting nexin family.

The protein localises to the endosome membrane. It is found in the preautophagosomal structure membrane. Functionally, required for cytoplasm to vacuole transport (Cvt), pexophagy and mitophagy. Also involved in endoplasmic reticulum-specific autophagic process and is essential for the survival of cells subjected to severe ER stress. Functions in protein retrieval from the endocytic pathway. In Kluyveromyces lactis (strain ATCC 8585 / CBS 2359 / DSM 70799 / NBRC 1267 / NRRL Y-1140 / WM37) (Yeast), this protein is Autophagy-related protein 20 (ATG20).